We begin with the raw amino-acid sequence, 226 residues long: ATP synthase F(0) complex subunit a (226 aa).

A run of 6 helical transmembrane segments spans residues 6-26 (FASFAAPTILGLPAAVLIILF), 68-88 (WSLMLVSLIIFITTTNLLGLL), 97-117 (QLSMNLAMAIPLWAGAVVMGF), 138-158 (IPMLVIIETISLLIQPMALAV), 164-184 (ITAGHLLMHLIGSATLALSTI), and 189-209 (ALIIFTILILLTILEIAVALI).

This sequence belongs to the ATPase A chain family. In terms of assembly, component of the ATP synthase complex composed at least of ATP5F1A/subunit alpha, ATP5F1B/subunit beta, ATP5MC1/subunit c (homooctomer), MT-ATP6/subunit a, MT-ATP8/subunit 8, ATP5ME/subunit e, ATP5MF/subunit f, ATP5MG/subunit g, ATP5MK/subunit k, ATP5MJ/subunit j, ATP5F1C/subunit gamma, ATP5F1D/subunit delta, ATP5F1E/subunit epsilon, ATP5PF/subunit F6, ATP5PB/subunit b, ATP5PD/subunit d, ATP5PO/subunit OSCP. ATP synthase complex consists of a soluble F(1) head domain (subunits alpha(3) and beta(3)) - the catalytic core - and a membrane F(0) domain - the membrane proton channel (subunits c, a, 8, e, f, g, k and j). These two domains are linked by a central stalk (subunits gamma, delta, and epsilon) rotating inside the F1 region and a stationary peripheral stalk (subunits F6, b, d, and OSCP). Interacts with DNAJC30; interaction is direct.

It is found in the mitochondrion inner membrane. It catalyses the reaction H(+)(in) = H(+)(out). Functionally, subunit a, of the mitochondrial membrane ATP synthase complex (F(1)F(0) ATP synthase or Complex V) that produces ATP from ADP in the presence of a proton gradient across the membrane which is generated by electron transport complexes of the respiratory chain. ATP synthase complex consist of a soluble F(1) head domain - the catalytic core - and a membrane F(1) domain - the membrane proton channel. These two domains are linked by a central stalk rotating inside the F(1) region and a stationary peripheral stalk. During catalysis, ATP synthesis in the catalytic domain of F(1) is coupled via a rotary mechanism of the central stalk subunits to proton translocation. With the subunit c (ATP5MC1), forms the proton-conducting channel in the F(0) domain, that contains two crucial half-channels (inlet and outlet) that facilitate proton movement from the mitochondrial intermembrane space (IMS) into the matrix. Protons are taken up via the inlet half-channel and released through the outlet half-channel, following a Grotthuss mechanism. This is ATP synthase F(0) complex subunit a from Pan troglodytes (Chimpanzee).